We begin with the raw amino-acid sequence, 111 residues long: Ribosome-binding factor A (111 aa).

Belongs to the RbfA family. In terms of assembly, monomer. Binds 30S ribosomal subunits, but not 50S ribosomal subunits or 70S ribosomes.

It localises to the cytoplasm. Its function is as follows. One of several proteins that assist in the late maturation steps of the functional core of the 30S ribosomal subunit. Associates with free 30S ribosomal subunits (but not with 30S subunits that are part of 70S ribosomes or polysomes). Required for efficient processing of 16S rRNA. May interact with the 5'-terminal helix region of 16S rRNA. In Helicobacter pylori (strain G27), this protein is Ribosome-binding factor A.